The sequence spans 337 residues: Cytoskeleton protein RodZ (337 aa).

Residues 1 to 111 lie on the Cytoplasmic side of the membrane; that stretch reads MNTEATHDQN…LGKRRKKRDG (111 aa). The 53-residue stretch at 19–71 folds into the HTH cro/C1-type domain; sequence LRNAREQLGLSQQAVAERLCLKVSTVRDIEEDKAPADLASTFLRGYIRSYARL. A DNA-binding region (H-T-H motif) is located at residues 30 to 49; it reads QQAVAERLCLKVSTVRDIEE. The chain crosses the membrane as a helical; Signal-anchor for type II membrane protein span at residues 112–132; sequence WLMTFTWLVLFVVIGLSGAWW. Over 133 to 337 the chain is Periplasmic; the sequence is WQDHKAQQEE…TLNAEQSPAQ (205 aa). Residues 145–167 show a composition bias toward polar residues; it reads TMADQSSAELSSNSEQGQSVPLN. The tract at residues 145–218 is disordered; the sequence is TMADQSSAEL…AVVSPSQANV (74 aa). The segment covering 168 to 207 has biased composition (low complexity); it reads TSTTTDPATTSTPPASVDTTATNTQTPAVTAPAPAVDPQQ. Residues 208–218 show a composition bias toward polar residues; it reads NAVVSPSQANV.

Belongs to the RodZ family.

It localises to the cell inner membrane. Cytoskeletal protein that is involved in cell-shape control through regulation of the length of the long axis. This is Cytoskeleton protein RodZ from Shigella dysenteriae serotype 1 (strain Sd197).